A 232-amino-acid polypeptide reads, in one-letter code: Phosphatidylserine decarboxylase proenzyme (232 aa).

Serine 190 serves as the catalytic Schiff-base intermediate with substrate; via pyruvic acid. Serine 190 is modified (pyruvic acid (Ser); by autocatalysis).

The protein belongs to the phosphatidylserine decarboxylase family. PSD-A subfamily. As to quaternary structure, heterodimer of a large membrane-associated beta subunit and a small pyruvoyl-containing alpha subunit. Requires pyruvate as cofactor. Post-translationally, is synthesized initially as an inactive proenzyme. Formation of the active enzyme involves a self-maturation process in which the active site pyruvoyl group is generated from an internal serine residue via an autocatalytic post-translational modification. Two non-identical subunits are generated from the proenzyme in this reaction, and the pyruvate is formed at the N-terminus of the alpha chain, which is derived from the carboxyl end of the proenzyme. The post-translation cleavage follows an unusual pathway, termed non-hydrolytic serinolysis, in which the side chain hydroxyl group of the serine supplies its oxygen atom to form the C-terminus of the beta chain, while the remainder of the serine residue undergoes an oxidative deamination to produce ammonia and the pyruvoyl prosthetic group on the alpha chain.

It is found in the cell membrane. It catalyses the reaction a 1,2-diacyl-sn-glycero-3-phospho-L-serine + H(+) = a 1,2-diacyl-sn-glycero-3-phosphoethanolamine + CO2. It functions in the pathway phospholipid metabolism; phosphatidylethanolamine biosynthesis; phosphatidylethanolamine from CDP-diacylglycerol: step 2/2. In terms of biological role, catalyzes the formation of phosphatidylethanolamine (PtdEtn) from phosphatidylserine (PtdSer). This Rhodopseudomonas palustris (strain TIE-1) protein is Phosphatidylserine decarboxylase proenzyme.